Consider the following 139-residue polypeptide: Nucleoside diphosphate kinase (139 aa).

Lysine 10, phenylalanine 58, arginine 86, threonine 92, arginine 103, and asparagine 113 together coordinate ATP. Catalysis depends on histidine 116, which acts as the Pros-phosphohistidine intermediate.

This sequence belongs to the NDK family. In terms of assembly, homotetramer. Requires Mg(2+) as cofactor.

The protein localises to the cytoplasm. The catalysed reaction is a 2'-deoxyribonucleoside 5'-diphosphate + ATP = a 2'-deoxyribonucleoside 5'-triphosphate + ADP. It carries out the reaction a ribonucleoside 5'-diphosphate + ATP = a ribonucleoside 5'-triphosphate + ADP. Functionally, major role in the synthesis of nucleoside triphosphates other than ATP. The ATP gamma phosphate is transferred to the NDP beta phosphate via a ping-pong mechanism, using a phosphorylated active-site intermediate. This chain is Nucleoside diphosphate kinase, found in Nitratidesulfovibrio vulgaris (strain DSM 19637 / Miyazaki F) (Desulfovibrio vulgaris).